The chain runs to 192 residues: Large ribosomal subunit protein uL24c (192 aa).

The transit peptide at 1-47 (MAAMAALQSSFTSLSLSSNSFLGQRLFPSPTTLQVKTEGHSPCLIVM) directs the protein to the chloroplast.

As to quaternary structure, component of the chloroplast large ribosomal subunit (LSU). Mature 70S chloroplast ribosomes of higher plants consist of a small (30S) and a large (50S) subunit. The 30S small subunit contains 1 molecule of ribosomal RNA (16S rRNA) and 24 different proteins. The 50S large subunit contains 3 rRNA molecules (23S, 5S and 4.5S rRNA) and 33 different proteins.

It is found in the plastid. It localises to the chloroplast. Functionally, component of the chloroplast ribosome (chloro-ribosome), a dedicated translation machinery responsible for the synthesis of chloroplast genome-encoded proteins, including proteins of the transcription and translation machinery and components of the photosynthetic apparatus. The protein is Large ribosomal subunit protein uL24c (RPL24) of Spinacia oleracea (Spinach).